The primary structure comprises 504 residues: 2,3-bisphosphoglycerate-independent phosphoglycerate mutase (504 aa).

The Mn(2+) site is built by Asp13 and Ser63. Residue Ser63 is the Phosphoserine intermediate of the active site. Substrate-binding positions include His124, 153 to 154, Arg183, Arg189, 254 to 257, and Lys330; these read RD and RADR. Mn(2+) contacts are provided by Asp397, His401, Asp438, His439, and His457.

It belongs to the BPG-independent phosphoglycerate mutase family. As to quaternary structure, monomer. The cofactor is Mn(2+).

It catalyses the reaction (2R)-2-phosphoglycerate = (2R)-3-phosphoglycerate. It functions in the pathway carbohydrate degradation; glycolysis; pyruvate from D-glyceraldehyde 3-phosphate: step 3/5. Functionally, catalyzes the interconversion of 2-phosphoglycerate and 3-phosphoglycerate. This chain is 2,3-bisphosphoglycerate-independent phosphoglycerate mutase, found in Rhodopseudomonas palustris (strain ATCC BAA-98 / CGA009).